The sequence spans 416 residues: Enterobactin exporter EntS (416 aa).

Residues 1–21 are Cytoplasmic-facing; it reads MNKQSWLLNLSLLKTHPAFRA. The helical transmembrane segment at 22-42 threads the bilayer; it reads VFLARFISIVSLGLLGVAVPV. Residues 43 to 55 are Periplasmic-facing; sequence QIQMMTHSTWQVG. The helical transmembrane segment at 56-76 threads the bilayer; it reads LSVTLTGGAMFVGLMVGGVLA. Topologically, residues 77–83 are cytoplasmic; that stretch reads DRYERKK. A helical membrane pass occupies residues 84–104; that stretch reads VILLARGTCGIGFIGLCLNAL. Residues 105-109 lie on the Periplasmic side of the membrane; sequence LPEPS. Residues 110–130 form a helical membrane-spanning segment; the sequence is LLAIYLLGLWDGFFASLGVTA. The Cytoplasmic portion of the chain corresponds to 131-156; the sequence is LLAATPALVGRENLMQAGAITMLTVR. Residues 157 to 177 form a helical membrane-spanning segment; it reads LGSVISPMIGGLLLATGGVAW. A topological domain (periplasmic) is located at residue N178. Residues 179 to 199 traverse the membrane as a helical segment; the sequence is YGLAAAGTFITLLPLLSLPAL. Residues 200–218 are Cytoplasmic-facing; it reads PPPPQPREHPLKSLLAGFR. The helical transmembrane segment at 219-239 threads the bilayer; that stretch reads FLLASPLVGGIALLGGLLTMA. Topologically, residues 240-256 are periplasmic; the sequence is SAVRVLYPALADNWQMS. Residues 257 to 277 traverse the membrane as a helical segment; it reads AAQIGFLYAAIPLGAAIGALT. The Cytoplasmic segment spans residues 278–287; the sequence is SGKLAHSARP. The helical transmembrane segment at 288–307 threads the bilayer; sequence GLLMLLSTLGSFLAIGLFGL. Residues 308–313 are Periplasmic-facing; the sequence is MPMWIL. Residues 314–336 traverse the membrane as a helical segment; the sequence is GVVCLALFGWLSAVSSLLQYTML. The Cytoplasmic segment spans residues 337-356; that stretch reads QTQTPEAMLGRINGLWTAQN. A helical membrane pass occupies residues 357–377; the sequence is VTGDAIGAALLGGLGAMMTPV. A378 is a topological domain (periplasmic). A helical transmembrane segment spans residues 379-399; it reads SASASGFGLLIIGVLLLLVLV. The Cytoplasmic portion of the chain corresponds to 400-416; sequence ELRRFRQTPPQVTASDS.

The protein belongs to the major facilitator superfamily. EntS (TC 2.A.1.38) family.

The protein resides in the cell inner membrane. Functionally, component of an export pathway for enterobactin. The chain is Enterobactin exporter EntS from Escherichia coli (strain 55989 / EAEC).